We begin with the raw amino-acid sequence, 262 residues long: NAD-dependent protein deacylase (262 aa).

Residues 1–262 (MSNLRRAAEA…AALSPPGVPT (262 aa)) enclose the Deacetylase sirtuin-type domain. 22–42 (GAGISADSGIPTFRDKLTGLW) lines the NAD(+) pocket. Substrate-binding residues include Tyr67 and Arg70. 101–104 (QNID) contributes to the NAD(+) binding site. The active-site Proton acceptor is the His119. Positions 127, 130, 155, and 158 each coordinate Zn(2+). NAD(+) is bound by residues 195–197 (GTS), 221–223 (NLE), and Ala239.

It belongs to the sirtuin family. Class III subfamily. Requires Zn(2+) as cofactor.

It is found in the cytoplasm. The catalysed reaction is N(6)-acetyl-L-lysyl-[protein] + NAD(+) + H2O = 2''-O-acetyl-ADP-D-ribose + nicotinamide + L-lysyl-[protein]. It catalyses the reaction N(6)-succinyl-L-lysyl-[protein] + NAD(+) + H2O = 2''-O-succinyl-ADP-D-ribose + nicotinamide + L-lysyl-[protein]. NAD-dependent lysine deacetylase and desuccinylase that specifically removes acetyl and succinyl groups on target proteins. Modulates the activities of several proteins which are inactive in their acylated form. The protein is NAD-dependent protein deacylase of Pseudomonas putida (strain ATCC 47054 / DSM 6125 / CFBP 8728 / NCIMB 11950 / KT2440).